The following is a 66-amino-acid chain: Large ribosomal subunit protein bL33c (66 aa).

This sequence belongs to the bacterial ribosomal protein bL33 family.

It is found in the plastid. Its subcellular location is the chloroplast. The protein is Large ribosomal subunit protein bL33c of Brachypodium distachyon (Purple false brome).